We begin with the raw amino-acid sequence, 358 residues long: Alanine racemase (358 aa).

The Proton acceptor; specific for D-alanine role is filled by Lys34. Lys34 is subject to N6-(pyridoxal phosphate)lysine. Residue Arg130 coordinates substrate. Tyr254 acts as the Proton acceptor; specific for L-alanine in catalysis. Met302 lines the substrate pocket.

Belongs to the alanine racemase family. Pyridoxal 5'-phosphate serves as cofactor.

It carries out the reaction L-alanine = D-alanine. It participates in amino-acid biosynthesis; D-alanine biosynthesis; D-alanine from L-alanine: step 1/1. Its function is as follows. Catalyzes the interconversion of L-alanine and D-alanine. May also act on other amino acids. This Stutzerimonas stutzeri (strain A1501) (Pseudomonas stutzeri) protein is Alanine racemase (alr).